We begin with the raw amino-acid sequence, 205 residues long: MEPNKSILQIMKSNSDKVKIILGNIITMLGNRIYIDNNGDSKPLLDPTNAFKNMEERGDNVFIIKADNGDLYAVKVIFQKITAISKQSVISEFLDEYETYKKIIVTKDYTGKIDTFILRNSGQIFKEHEFLADLLSNEFQPRFQLLSPSEMESVKTEYNANPYTLKKIVRSDPIVRYFALKKNDIIRIIRPSATSGQGIDYRVVV.

The protein belongs to the archaeal Rpo5/eukaryotic RPB5 RNA polymerase subunit family.

Its subcellular location is the virion. It catalyses the reaction RNA(n) + a ribonucleoside 5'-triphosphate = RNA(n+1) + diphosphate. In terms of biological role, DNA-dependent RNA polymerase catalyzes the transcription of DNA into RNA using the four ribonucleoside triphosphates as substrates. The polypeptide is DNA-directed RNA polymerase subunit 5 (Acanthamoeba polyphaga (Amoeba)).